We begin with the raw amino-acid sequence, 519 residues long: Sensor protein RprX (519 aa).

2 helical membrane-spanning segments follow: residues 5 to 25 and 260 to 280; these read TIWI…YLQV and IPSM…IYIV. In terms of domain architecture, Histidine kinase spans 296–517; that stretch reads NMTHEFKTPI…KFIIALPLLK (222 aa). His-299 is modified (phosphohistidine; by autocatalysis).

It is found in the cell membrane. The catalysed reaction is ATP + protein L-histidine = ADP + protein N-phospho-L-histidine.. Functionally, member of the two-component regulatory system RprX/RprY. May activate RprY by phosphorylation. The sequence is that of Sensor protein RprX (rprX) from Bacteroides fragilis (strain YCH46).